Reading from the N-terminus, the 430-residue chain is C4-dicarboxylate transport protein (430 aa).

The next 9 helical transmembrane spans lie at 8 to 28 (SLYFQVLTAITLGVLLGHFYP), 44 to 64 (LIKMIIAPVIFCTVVTGIAGM), 76 to 96 (IALLYFEIVSTIALLIGLVIV), 144 to 164 (AFASGNILQVLLFAVLFGFAL), 184 to 204 (VIFGIINMIMRLAPIGAFGAM), 222 to 242 (LIICFYITCVLFVVVVLGSIA), 289 to 309 (VVGLVIPTGYSFNLDGTSIYL), 326 to 346 (VIHQVTLLVVLLLSSKGAAGV), and 352 to 372 (IVLAATISAVGHLPLAGLALI).

This sequence belongs to the dicarboxylate/amino acid:cation symporter (DAACS) (TC 2.A.23) family.

The protein localises to the cell inner membrane. Its function is as follows. Responsible for the transport of dicarboxylates such as succinate, fumarate, and malate from the periplasm across the membrane. In Yersinia enterocolitica serotype O:8 / biotype 1B (strain NCTC 13174 / 8081), this protein is C4-dicarboxylate transport protein.